A 398-amino-acid chain; its full sequence is ATP-dependent RNA helicase eIF4A (398 aa).

A Q motif motif is present at residues 25-53 (DSFDSMDLKPELLRGIYAYGFERPSAIQQ). One can recognise a Helicase ATP-binding domain in the interval 56–226 (IMPIIKGSDV…TKFMRDPVRI (171 aa)). 69–76 (AQSGTGKT) contacts ATP. The short motif at 174–177 (DEAD) is the DEAD box element. Residues 237–398 (GIKQFYIAVE…EMPMNVADLI (162 aa)) form the Helicase C-terminal domain.

Belongs to the DEAD box helicase family. eIF4A subfamily. As to quaternary structure, component of the eIF4F complex, which composition varies with external and internal environmental conditions. It is composed of at least eIF4A, eIF4E and eIF4G.

It is found in the cytoplasm. It catalyses the reaction ATP + H2O = ADP + phosphate + H(+). In terms of biological role, ATP-dependent RNA helicase which is a subunit of the eIF4F complex involved in cap recognition and is required for mRNA binding to ribosome. In the current model of translation initiation, eIF4A unwinds RNA secondary structures in the 5'-UTR of mRNAs which is necessary to allow efficient binding of the small ribosomal subunit, and subsequent scanning for the initiator codon. The chain is ATP-dependent RNA helicase eIF4A (tif1) from Aspergillus clavatus (strain ATCC 1007 / CBS 513.65 / DSM 816 / NCTC 3887 / NRRL 1 / QM 1276 / 107).